The chain runs to 463 residues: Argininosuccinate lyase (463 aa).

This sequence belongs to the lyase 1 family. Argininosuccinate lyase subfamily.

The protein resides in the cytoplasm. The enzyme catalyses 2-(N(omega)-L-arginino)succinate = fumarate + L-arginine. It participates in amino-acid biosynthesis; L-arginine biosynthesis; L-arginine from L-ornithine and carbamoyl phosphate: step 3/3. In Methylorubrum extorquens (strain CM4 / NCIMB 13688) (Methylobacterium extorquens), this protein is Argininosuccinate lyase.